The following is a 266-amino-acid chain: Thiazole synthase (266 aa).

Lysine 107 serves as the catalytic Schiff-base intermediate with DXP. 1-deoxy-D-xylulose 5-phosphate contacts are provided by residues glycine 168, 194–195 (AG), and 216–217 (NT).

This sequence belongs to the ThiG family. In terms of assembly, homotetramer. Forms heterodimers with either ThiH or ThiS.

The protein localises to the cytoplasm. The catalysed reaction is [ThiS sulfur-carrier protein]-C-terminal-Gly-aminoethanethioate + 2-iminoacetate + 1-deoxy-D-xylulose 5-phosphate = [ThiS sulfur-carrier protein]-C-terminal Gly-Gly + 2-[(2R,5Z)-2-carboxy-4-methylthiazol-5(2H)-ylidene]ethyl phosphate + 2 H2O + H(+). It participates in cofactor biosynthesis; thiamine diphosphate biosynthesis. Functionally, catalyzes the rearrangement of 1-deoxy-D-xylulose 5-phosphate (DXP) to produce the thiazole phosphate moiety of thiamine. Sulfur is provided by the thiocarboxylate moiety of the carrier protein ThiS. In vitro, sulfur can be provided by H(2)S. The sequence is that of Thiazole synthase from Azorhizobium caulinodans (strain ATCC 43989 / DSM 5975 / JCM 20966 / LMG 6465 / NBRC 14845 / NCIMB 13405 / ORS 571).